The sequence spans 165 residues: Regulator of ribonuclease activity A (165 aa).

The protein belongs to the RraA family. In terms of assembly, homotrimer. Binds to both RNA-binding sites in the C-terminal region of Rne and to RhlB.

It localises to the cytoplasm. In terms of biological role, globally modulates RNA abundance by binding to RNase E (Rne) and regulating its endonucleolytic activity. Can modulate Rne action in a substrate-dependent manner by altering the composition of the degradosome. Modulates RNA-binding and helicase activities of the degradosome. The sequence is that of Regulator of ribonuclease activity A from Pseudoalteromonas translucida (strain TAC 125).